We begin with the raw amino-acid sequence, 501 residues long: Phytoene desaturase (lycopene-forming) (501 aa).

12–45 (IVIGAGFGGLALAIRLQSAGIATTLVEARDKPGG) provides a ligand contact to FAD.

The protein belongs to the carotenoid/retinoid oxidoreductase family. The cofactor is FAD.

The catalysed reaction is 15-cis-phytoene + 4 A = all-trans-lycopene + 4 AH2. It participates in carotenoid biosynthesis; astaxanthin biosynthesis. This enzyme converts phytoene into lycopene via the intermediaries of phytofluene, zeta-carotene and neurosporene by the introduction of four double bonds. The sequence is that of Phytoene desaturase (lycopene-forming) (crtI) from Paracoccus sp. (strain N81106 / MBIC 01143) (Agrobacterium aurantiacum).